Here is a 143-residue protein sequence, read N- to C-terminus: 18 kDa heat shock protein (143 aa).

Residues 23–135 (TWSRPTAMPM…KRRRVKVGQG (113 aa)) form the sHSP domain.

The protein belongs to the small heat shock protein (HSP20) family.

The protein is 18 kDa heat shock protein (hsp18) of Streptomyces albus G.